The chain runs to 229 residues: Tubulin-specific chaperone B (229 aa).

Residues 170–212 (GATKFKEGVWVGVKYDEPVGKNDGSVAGVRYFDCDPKYGGFVR) form the CAP-Gly domain.

The protein belongs to the TBCB family. Supercomplex made of cofactors A to E. Cofactors A and D function by capturing and stabilizing tubulin in a quasi-native conformation. Cofactor E binds to the cofactor D-tubulin complex; interaction with cofactor C then causes the release of tubulin polypeptides that are committed to the native state.

The protein resides in the cytoplasm. It is found in the cytoskeleton. Binds to alpha-tubulin folding intermediates after their interaction with cytosolic chaperonin in the pathway leading from newly synthesized tubulin to properly folded heterodimer. This is Tubulin-specific chaperone B from Caenorhabditis elegans.